Consider the following 439-residue polypeptide: Glutamyl-tRNA(Gln) amidotransferase subunit D (439 aa).

The region spanning 88-419 is the Asparaginase/glutaminase domain; sequence GKVKIISTGG…EEVKRIMLTN (332 aa). Active-site residues include T98, T174, D175, and K253.

It belongs to the asparaginase 1 family. GatD subfamily. As to quaternary structure, heterodimer of GatD and GatE.

It catalyses the reaction L-glutamyl-tRNA(Gln) + L-glutamine + ATP + H2O = L-glutaminyl-tRNA(Gln) + L-glutamate + ADP + phosphate + H(+). In terms of biological role, allows the formation of correctly charged Gln-tRNA(Gln) through the transamidation of misacylated Glu-tRNA(Gln) in organisms which lack glutaminyl-tRNA synthetase. The reaction takes place in the presence of glutamine and ATP through an activated gamma-phospho-Glu-tRNA(Gln). The GatDE system is specific for glutamate and does not act on aspartate. The polypeptide is Glutamyl-tRNA(Gln) amidotransferase subunit D (Metallosphaera sedula (strain ATCC 51363 / DSM 5348 / JCM 9185 / NBRC 15509 / TH2)).